Here is a 576-residue protein sequence, read N- to C-terminus: Arginine--tRNA ligase (576 aa).

The short motif at 122-132 is the 'HIGH' region element; that stretch reads PNVAKQMHVGH.

It belongs to the class-I aminoacyl-tRNA synthetase family. In terms of assembly, monomer.

Its subcellular location is the cytoplasm. The enzyme catalyses tRNA(Arg) + L-arginine + ATP = L-arginyl-tRNA(Arg) + AMP + diphosphate. This is Arginine--tRNA ligase from Photorhabdus laumondii subsp. laumondii (strain DSM 15139 / CIP 105565 / TT01) (Photorhabdus luminescens subsp. laumondii).